The following is a 56-amino-acid chain: uncharacterized protein (56 aa).

2 helical membrane-spanning segments follow: residues 5 to 23 (VLIFLIGYLPFFLAAYWIY) and 33 to 55 (ITAGAILSFDAAMLAIFGGILGW).

The protein resides in the cell membrane. This is an uncharacterized protein from Archaeoglobus fulgidus (strain ATCC 49558 / DSM 4304 / JCM 9628 / NBRC 100126 / VC-16).